The chain runs to 369 residues: Histidinol-phosphate aminotransferase 2 (369 aa).

K231 carries the N6-(pyridoxal phosphate)lysine modification.

The protein belongs to the class-II pyridoxal-phosphate-dependent aminotransferase family. Histidinol-phosphate aminotransferase subfamily. In terms of assembly, homodimer. Requires pyridoxal 5'-phosphate as cofactor.

The catalysed reaction is L-histidinol phosphate + 2-oxoglutarate = 3-(imidazol-4-yl)-2-oxopropyl phosphate + L-glutamate. The protein operates within amino-acid biosynthesis; L-histidine biosynthesis; L-histidine from 5-phospho-alpha-D-ribose 1-diphosphate: step 7/9. The sequence is that of Histidinol-phosphate aminotransferase 2 from Legionella pneumophila (strain Lens).